The following is a 447-amino-acid chain: ATP-dependent protease ATPase subunit HslU (447 aa).

ATP contacts are provided by residues isoleucine 17, 59–64 (GVGKTE), aspartate 256, glutamate 321, and arginine 393.

It belongs to the ClpX chaperone family. HslU subfamily. A double ring-shaped homohexamer of HslV is capped on each side by a ring-shaped HslU homohexamer. The assembly of the HslU/HslV complex is dependent on binding of ATP.

Its subcellular location is the cytoplasm. Functionally, ATPase subunit of a proteasome-like degradation complex; this subunit has chaperone activity. The binding of ATP and its subsequent hydrolysis by HslU are essential for unfolding of protein substrates subsequently hydrolyzed by HslV. HslU recognizes the N-terminal part of its protein substrates and unfolds these before they are guided to HslV for hydrolysis. This is ATP-dependent protease ATPase subunit HslU from Stutzerimonas stutzeri (strain A1501) (Pseudomonas stutzeri).